The primary structure comprises 156 residues: Small ribosomal subunit protein uS7 (156 aa).

This sequence belongs to the universal ribosomal protein uS7 family. As to quaternary structure, part of the 30S ribosomal subunit. Contacts proteins S9 and S11.

One of the primary rRNA binding proteins, it binds directly to 16S rRNA where it nucleates assembly of the head domain of the 30S subunit. Is located at the subunit interface close to the decoding center, probably blocks exit of the E-site tRNA. The polypeptide is Small ribosomal subunit protein uS7 (Syntrophobacter fumaroxidans (strain DSM 10017 / MPOB)).